Here is a 157-residue protein sequence, read N- to C-terminus: Ribosome-binding factor A (157 aa).

Positions 127-157 (QQQFGSEDASVEDEVLGDDVADDADETEGKD) are disordered. Residues 135-157 (ASVEDEVLGDDVADDADETEGKD) are compositionally biased toward acidic residues.

Belongs to the RbfA family. Monomer. Binds 30S ribosomal subunits, but not 50S ribosomal subunits or 70S ribosomes.

It localises to the cytoplasm. In terms of biological role, one of several proteins that assist in the late maturation steps of the functional core of the 30S ribosomal subunit. Associates with free 30S ribosomal subunits (but not with 30S subunits that are part of 70S ribosomes or polysomes). Required for efficient processing of 16S rRNA. May interact with the 5'-terminal helix region of 16S rRNA. The protein is Ribosome-binding factor A of Shewanella baltica (strain OS155 / ATCC BAA-1091).